The primary structure comprises 94 residues: Small ribosomal subunit protein uS17 (94 aa).

Residues 1–22 (MSEQTSAASTTDRGDRKTRRGY) are disordered.

This sequence belongs to the universal ribosomal protein uS17 family. Part of the 30S ribosomal subunit.

In terms of biological role, one of the primary rRNA binding proteins, it binds specifically to the 5'-end of 16S ribosomal RNA. The polypeptide is Small ribosomal subunit protein uS17 (Kineococcus radiotolerans (strain ATCC BAA-149 / DSM 14245 / SRS30216)).